Consider the following 141-residue polypeptide: Putative pre-16S rRNA nuclease (141 aa).

The protein belongs to the YqgF nuclease family.

The protein resides in the cytoplasm. Its function is as follows. Could be a nuclease involved in processing of the 5'-end of pre-16S rRNA. This chain is Putative pre-16S rRNA nuclease, found in Aliivibrio fischeri (strain ATCC 700601 / ES114) (Vibrio fischeri).